The chain runs to 129 residues: Small ribosomal subunit protein uS11 (129 aa).

It belongs to the universal ribosomal protein uS11 family. Part of the 30S ribosomal subunit. Interacts with proteins S7 and S18. Binds to IF-3.

Its function is as follows. Located on the platform of the 30S subunit, it bridges several disparate RNA helices of the 16S rRNA. Forms part of the Shine-Dalgarno cleft in the 70S ribosome. This is Small ribosomal subunit protein uS11 from Xanthobacter autotrophicus (strain ATCC BAA-1158 / Py2).